Consider the following 658-residue polypeptide: DNA ligase (658 aa).

NAD(+) is bound by residues 31 to 35 (DFEYD), 80 to 81 (SL), and Glu110. Catalysis depends on Lys112, which acts as the N6-AMP-lysine intermediate. 4 residues coordinate NAD(+): Arg133, Glu167, Lys279, and Lys303. Zn(2+) contacts are provided by Cys397, Cys400, Cys415, and Cys420. A BRCT domain is found at 584–654 (DTASIYFQKS…KALNIPIINE (71 aa)).

Belongs to the NAD-dependent DNA ligase family. LigA subfamily. The cofactor is Mg(2+). Mn(2+) serves as cofactor.

It catalyses the reaction NAD(+) + (deoxyribonucleotide)n-3'-hydroxyl + 5'-phospho-(deoxyribonucleotide)m = (deoxyribonucleotide)n+m + AMP + beta-nicotinamide D-nucleotide.. Its function is as follows. DNA ligase that catalyzes the formation of phosphodiester linkages between 5'-phosphoryl and 3'-hydroxyl groups in double-stranded DNA using NAD as a coenzyme and as the energy source for the reaction. It is essential for DNA replication and repair of damaged DNA. This is DNA ligase from Mycoplasma pneumoniae (strain ATCC 29342 / M129 / Subtype 1) (Mycoplasmoides pneumoniae).